The sequence spans 375 residues: tRNA-specific 2-thiouridylase MnmA (375 aa).

ATP contacts are provided by residues 12–19 and methionine 38; that span reads GMSGGVDS. The interval 98–100 is interaction with target base in tRNA; the sequence is NPD. The Nucleophile role is filled by cysteine 103. Residues cysteine 103 and cysteine 200 are joined by a disulfide bond. Glycine 127 is a binding site for ATP. Residues 150-152 are interaction with tRNA; it reads KDQ. Cysteine 200 acts as the Cysteine persulfide intermediate in catalysis. Residues 312 to 313 are interaction with tRNA; that stretch reads RY.

It belongs to the MnmA/TRMU family.

Its subcellular location is the cytoplasm. It catalyses the reaction S-sulfanyl-L-cysteinyl-[protein] + uridine(34) in tRNA + AH2 + ATP = 2-thiouridine(34) in tRNA + L-cysteinyl-[protein] + A + AMP + diphosphate + H(+). In terms of biological role, catalyzes the 2-thiolation of uridine at the wobble position (U34) of tRNA, leading to the formation of s(2)U34. The protein is tRNA-specific 2-thiouridylase MnmA of Lactobacillus helveticus (strain DPC 4571).